The chain runs to 126 residues: Large ribosomal subunit protein bL19 (126 aa).

The protein belongs to the bacterial ribosomal protein bL19 family.

In terms of biological role, this protein is located at the 30S-50S ribosomal subunit interface and may play a role in the structure and function of the aminoacyl-tRNA binding site. This chain is Large ribosomal subunit protein bL19, found in Prochlorococcus marinus (strain MIT 9312).